A 522-amino-acid polypeptide reads, in one-letter code: WEB family protein At2g38370 (522 aa).

The tract at residues 1-32 (MAEFPEPGTVNPDSDLSNGRAEKPEIDTSAPF) is disordered. 2 coiled-coil regions span residues 77–264 (ELQR…AARE) and 299–376 (ARSA…RSEN). Disordered regions lie at residues 374 to 397 (SENG…SRRE) and 458 to 493 (MSLG…RKRK). The span at 473-486 (TVSKRSEGKENEKR) shows a compositional bias: basic and acidic residues.

It belongs to the WEB family.

In Arabidopsis thaliana (Mouse-ear cress), this protein is WEB family protein At2g38370.